Here is a 150-residue protein sequence, read N- to C-terminus: Globin-1 (150 aa).

Positions 11–150 constitute a Globin domain; sequence ALTAAEKATI…MICILLRSSY (140 aa). The heme b site is built by His-74 and His-106.

This sequence belongs to the globin family. As to quaternary structure, monomer.

This Petromyzon marinus (Sea lamprey) protein is Globin-1.